A 500-amino-acid chain; its full sequence is Cytochrome P450 71B36 (500 aa).

A helical transmembrane segment spans residues 1-21 (MATILFLSLLFLSCILLAAFT). Residue C440 participates in heme binding.

The protein belongs to the cytochrome P450 family. It depends on heme as a cofactor.

The protein localises to the membrane. The sequence is that of Cytochrome P450 71B36 (CYP71B36) from Arabidopsis thaliana (Mouse-ear cress).